The following is a 180-amino-acid chain: Large ribosomal subunit protein uL5 (180 aa).

The protein belongs to the universal ribosomal protein uL5 family. As to quaternary structure, part of the 50S ribosomal subunit; part of the 5S rRNA/L5/L18/L25 subcomplex. Contacts the 5S rRNA and the P site tRNA. Forms a bridge to the 30S subunit in the 70S ribosome.

Its function is as follows. This is one of the proteins that bind and probably mediate the attachment of the 5S RNA into the large ribosomal subunit, where it forms part of the central protuberance. In the 70S ribosome it contacts protein S13 of the 30S subunit (bridge B1b), connecting the 2 subunits; this bridge is implicated in subunit movement. Contacts the P site tRNA; the 5S rRNA and some of its associated proteins might help stabilize positioning of ribosome-bound tRNAs. This Synechocystis sp. (strain ATCC 27184 / PCC 6803 / Kazusa) protein is Large ribosomal subunit protein uL5.